We begin with the raw amino-acid sequence, 456 residues long: Na(+)/H(+) antiporter NhaA 3 (456 aa).

11 consecutive transmembrane segments (helical) span residues 32 to 52 (IEAT…TLSN), 87 to 107 (GLMT…VVLG), 114 to 134 (MVAL…GLYL), 145 to 165 (GWGV…ALLG), 174 to 194 (VFLL…VAVG), 202 to 222 (TALA…LLGV), 233 to 253 (AIIW…GVIL), 318 to 338 (WVAF…PITI), 347 to 367 (LAVM…FAWL), 382 to 402 (WGGL…ALFI), and 417 to 437 (LGIL…LCAL).

It belongs to the NhaA Na(+)/H(+) (TC 2.A.33) antiporter family.

The protein resides in the cell inner membrane. It catalyses the reaction Na(+)(in) + 2 H(+)(out) = Na(+)(out) + 2 H(+)(in). In terms of biological role, na(+)/H(+) antiporter that extrudes sodium in exchange for external protons. The polypeptide is Na(+)/H(+) antiporter NhaA 3 (Acidiphilium cryptum (strain JF-5)).